The following is a 138-amino-acid chain: uncharacterized protein (138 aa).

The 70-residue stretch at 3-72 (LYSISKAAEK…LEDINEFVKD (70 aa)) folds into the HTH merR-type domain. The segment at residues 6-25 (ISKAAEKTSISSYTLRYYEK) is a DNA-binding region (H-T-H motif).

This is an uncharacterized protein from Bacillus subtilis (strain 168).